Consider the following 245-residue polypeptide: tRNA pseudouridine synthase A (245 aa).

D52 serves as the catalytic Nucleophile. Y111 is a binding site for substrate.

The protein belongs to the tRNA pseudouridine synthase TruA family. Homodimer.

It catalyses the reaction uridine(38/39/40) in tRNA = pseudouridine(38/39/40) in tRNA. Formation of pseudouridine at positions 38, 39 and 40 in the anticodon stem and loop of transfer RNAs. The chain is tRNA pseudouridine synthase A from Thermotoga sp. (strain RQ2).